The following is a 426-amino-acid chain: Cephalotocin receptor 2 (426 aa).

Topologically, residues 1-51 (MYQAMEVESTSPSGFFLDFYTQSTIPTTDFLNNTNSSHPIRDEKLVKIEIA) are extracellular. N-linked (GlcNAc...) asparagine glycosylation is found at Asn32 and Asn35. Residues 52 to 72 (VLGTCFTLAIINNLCVLLVLL) traverse the membrane as a helical segment. Topologically, residues 73-84 (WRRKKVRRMQMF) are cytoplasmic. The helical transmembrane segment at 85 to 105 (ILHLSIADLIVAFFNILPQLI) threads the bilayer. Residues 106 to 120 (WDITFRFMAGDAMCR) lie on the Extracellular side of the membrane. An intrachain disulfide couples Cys119 to Cys198. Residues 121–141 (FIKYAQMFSLYLSTYILIMTA) form a helical membrane-spanning segment. Over 142-165 (VDRYRAICHPLSNQTWTPCMVYCK) the chain is Cytoplasmic. Residues 166-186 (IFIAYAIATIFSIPQAILFQM) traverse the membrane as a helical segment. At 187–208 (QEVNEGSGIYDCWVHFEPAWVL) the chain is on the extracellular side. Residues 209–229 (TAYALYIFFALYLIPILILFF) traverse the membrane as a helical segment. Residues 230 to 288 (TYGSICYTIWAKYRHAIKTKKDANTRYPQRRKKKGVILRTHSVHGFSKAKLNSVKLTFA) are Cytoplasmic-facing. The helical transmembrane segment at 289–309 (VIVTYIICWSPFFVSQIWWLF) threads the bilayer. The Extracellular portion of the chain corresponds to 310 to 319 (DETVVGNAGV). The helical transmembrane segment at 320 to 340 (VVILLMACLNSCTNPWIYLIF) threads the bilayer. The Cytoplasmic segment spans residues 341–426 (NRNYISNVLP…DQFIYSDKTT (86 aa)). The disordered stretch occupies residues 373-426 (GSVRRDSRKTSDPKRISESRRISDARRISGKTQKNNSSSPRKTSDQFIYSDKTT). Residues 375 to 399 (VRRDSRKTSDPKRISESRRISDARR) are compositionally biased toward basic and acidic residues. A compositionally biased stretch (polar residues) spans 402–426 (GKTQKNNSSSPRKTSDQFIYSDKTT).

Belongs to the G-protein coupled receptor 1 family. Vasopressin/oxytocin receptor subfamily. In terms of tissue distribution, present in various peripheral tissues with highest expression in branchia and vas deferens. Very low expression detected in nervous system.

The protein resides in the cell membrane. In terms of biological role, acts as a receptor for cephalotocin. This chain is Cephalotocin receptor 2, found in Octopus vulgaris (Common octopus).